The following is a 1246-amino-acid chain: MMETERLVLPPPDPLDLPLRAVELGCTGHWELLNLPGAPESSLPHGLPPCAPDLQQEAEQLFLSSPAWLPLHGVEHSARKWQRKTDPWSLLAVLGAPVPSDLQAQRHPTTGQILGYKEVLLENTNLSATTSLSLRRPPGPASQSLWGNPTQYPFWPGGMDEPTITDLNTREEAEEEIDFEKDLLTIPPGFKKGMDFAPKDCPTPAPGLLSLSCMLEPLDLGGGDEDENEAVGQPGGPRGDTVSASPCSAPLARASSLEDLVLKEASTAVSTPEAPEPPSQEQWAIPVDATSPVGDFYRLIPQPAFQWAFEPDVFQKQAILHLERHDSVFVAAHTSAGKTVVAEYAIALAQKHMTRTIYTSPIKALSNQKFRDFRNTFGDVGLLTGDVQLHPEASCLIMTTEILRSMLYSGSDVIRDLEWVIFDEVHYINDVERGVVWEEVLIMLPDHVSIILLSATVPNALEFADWIGRLKRRQIYVISTVTRPVPLEHYLFTGNSSKTQGELFLLLDSRGAFHTKGYYAAVEAKKERMSKHAQTFGAKQPTHQGGPAQDRGVYLSLLASLRTRAQLPVVVFTFSRGRCDEQASGLTSLDLTTSSEKSEIHLFLQRCLARLRGSDRQLPQVLHMSELLNRGLGVHHSGILPILKEIVEMLFSRGLVKVLFATETFAMGVNMPARTVVFDSMRKHDGSTFRDLLPGEYVQMAGRAGRRGLDPTGTVILLCKGRVPEMADLHRMMMGKPSQLQSQFRLTYTMILNLLRVDALRVEDMMKRSFSEFPSRKDSKAHEQALAELTKRLGALEEPDMTGQLVDLPEYYSWGEELTETQHMIQRRIMESVNGLKSLSAGRVVVVKNQEHHNALGVILQVSSNSTSRVFTTLVLCDKPLSQDPQDRGPATAEVPYPDDLVGFKLFLPEGPCDHTVVKLQPGDMAAITTKVLRVNGEKILEDFSKRQQPKFKKDPPLAAVTTAVQELLRLAQAHPAGPPTLDPVNDLQLKDMSVVEGGLRARKLEELIQGAQCVHSPRFPAQYLKLRERMQIQKEMERLRFLLSDQSLLLLPEYHQRVEVLRTLGYVDEAGTVKLAGRVACAMSSHELLLTELMFDNALSTLRPEEIAALLSGLVCQSPGDAGDQLPNTLKQGIERVRAVAKRIGEVQVACGLNQTVEEFVGELNFGLVEVVYEWARGMPFSELAGLSGTPEGLVVRCIQRLAEMCRSLRGAARLVGEPVLGAKMETAATLLRRDIVFAASLYTQ.

The disordered stretch occupies residues 220-246; it reads LGGGDEDENEAVGQPGGPRGDTVSASP. Phosphoserine is present on residues S245 and S256. One can recognise a Helicase ATP-binding domain in the interval 319–475; it reads ILHLERHDSV…WIGRLKRRQI (157 aa). Residue 332-339 coordinates ATP; it reads AHTSAGKT. The short motif at 423–426 is the DEVH box element; it reads DEVH. Residues 585–755 form the Helicase C-terminal domain; that stretch reads GLTSLDLTTS…LTYTMILNLL (171 aa).

The protein belongs to the helicase family. SKI2 subfamily. In terms of assembly, component of the SKI complex which consists of SKIC2, SKIC3 and SKIC8. Interacts with HBS1L isoform 2.

It is found in the nucleus. The protein localises to the cytoplasm. It carries out the reaction ATP + H2O = ADP + phosphate + H(+). In terms of biological role, helicase component of the SKI complex, a multiprotein complex that assists the RNA-degrading exosome during the mRNA decay and quality-control pathways. The SKI complex catalyzes mRNA extraction from 80S ribosomal complexes in the 3'-5' direction and channels mRNA to the cytosolic exosome for degradation. SKI-mediated extraction of mRNA from stalled ribosomes allow binding of the Pelota-HBS1L complex and subsequent ribosome disassembly by ABCE1 for ribosome recycling. In the nucleus, the SKI complex associates with transcriptionally active genes in a manner dependent on PAF1 complex (PAF1C). The protein is Superkiller complex protein 2 of Homo sapiens (Human).